The primary structure comprises 182 residues: Probable inosine/xanthosine triphosphatase (182 aa).

Residue Glu65 coordinates Mg(2+). Residue 65–66 coordinates substrate; the sequence is EA.

It belongs to the YjjX NTPase family. Homodimer. It depends on Mg(2+) as a cofactor. Requires Mn(2+) as cofactor.

It carries out the reaction XTP + H2O = XDP + phosphate + H(+). The catalysed reaction is ITP + H2O = IDP + phosphate + H(+). In terms of biological role, phosphatase that hydrolyzes non-canonical purine nucleotides such as XTP and ITP to their respective diphosphate derivatives. Probably excludes non-canonical purines from DNA/RNA precursor pool, thus preventing their incorporation into DNA/RNA and avoiding chromosomal lesions. This is Probable inosine/xanthosine triphosphatase from Pyrobaculum neutrophilum (strain DSM 2338 / JCM 9278 / NBRC 100436 / V24Sta) (Thermoproteus neutrophilus).